A 470-amino-acid chain; its full sequence is Cyclic AMP receptor-like protein D (470 aa).

The Extracellular segment spans residues 1–16; it reads MSSCSSLSMDDRVKIG. Residues 17-37 form a helical membrane-spanning segment; it reads YGSIAGASLSIIGSIGTIILI. Residues 38 to 123 are Cytoplasmic-facing; that stretch reads KIRNKKQEKK…NNNQKTKVSH (86 aa). The helical transmembrane segment at 124–144 threads the bilayer; it reads FIINLSIANLLASIFMITIKL. Residues 145-176 lie on the Extracellular side of the membrane; the sequence is MMIHFNDKFIKVLPSTANHSFNALISVCTIGN. A glycan (N-linked (GlcNAc...) asparagine) is linked at N162. C172 and C287 are disulfide-bonded. Residues 177-197 form a helical membrane-spanning segment; that stretch reads GVIGFSFISTFFWTLAISMYI. The Cytoplasmic portion of the chain corresponds to 198–253; it reads YQQFLSSSTINSNNNNNNINNINNNNNNNINNINNSKNNNSINNFNNSNKSNKIIK. Residues 254–274 form a helical membrane-spanning segment; sequence MLFYFVCWVIPFVLGSILVSG. Topologically, residues 275-295 are extracellular; it reads SRLIELNSDLPWCSIDSNIQL. The chain crosses the membrane as a helical span at residues 296–316; it reads ISFYFPLIICLLATTFFTILI. Residues 317-342 are Cytoplasmic-facing; the sequence is KYKFSNDKLACSSSSLINLQSKIIQR. Residues 343 to 363 form a helical membrane-spanning segment; sequence LILFLIVILVCWVPSLISFFI. The Extracellular segment spans residues 364–372; the sequence is SFFSKNCKQ. Residues 373–393 form a helical membrane-spanning segment; that stretch reads FLWLEIISSTIQSCQGILNFL. The Cytoplasmic segment spans residues 394-470; sequence SYLSIFKKLK…DFDNNQIQEK (77 aa).

This sequence belongs to the G-protein coupled receptor 5 family.

It localises to the membrane. In terms of biological role, receptor for cAMP. The chain is Cyclic AMP receptor-like protein D (crlD) from Dictyostelium discoideum (Social amoeba).